The following is a 124-amino-acid chain: Putative membrane protein insertion efficiency factor (124 aa).

This sequence belongs to the UPF0161 family.

The protein resides in the cell inner membrane. Could be involved in insertion of integral membrane proteins into the membrane. This is Putative membrane protein insertion efficiency factor from Psychrobacter cryohalolentis (strain ATCC BAA-1226 / DSM 17306 / VKM B-2378 / K5).